Reading from the N-terminus, the 591-residue chain is Melatonin-related receptor (591 aa).

At 1–38 (MATVPKSNMGPTKAVPTPFGCIGCKLPKPDYPPALIIF) the chain is on the extracellular side. The helical transmembrane segment at 39 to 59 (MFCAMVITVVVDLIGNSMVIL) threads the bilayer. Residues 60-72 (AVTKNKKLRNSGN) lie on the Cytoplasmic side of the membrane. Residues 73–93 (IFVASLSVADMLVAIYPYPLM) form a helical membrane-spanning segment. The Extracellular segment spans residues 94 to 111 (LYAMSVGGWDLSQLQCQM). Residues cysteine 109 and cysteine 186 are joined by a disulfide bond. The chain crosses the membrane as a helical span at residues 112 to 132 (VGLVTGLSVVGSIFNITAIAI). The Cytoplasmic segment spans residues 133-151 (NRYCYICHSLQYKRIFSLR). Residues 152–172 (NTCIYLVVTWVMTVLAVLPNM) form a helical membrane-spanning segment. Topologically, residues 173-196 (YIGTIEYDPRTYTCIFNYVNNPAF) are extracellular. The helical transmembrane segment at 197 to 217 (TVTIVCIHFVLPLIIVGYCYT) threads the bilayer. Residues 218 to 247 (KIWIKVLAARDPAGQNPDNQFAEVRNFLTM) lie on the Cytoplasmic side of the membrane. A helical membrane pass occupies residues 248–268 (FVIFLLFAVCWCPVNVLTVLV). The Extracellular portion of the chain corresponds to 269-281 (AVIPKEMAGKIPN). The helical transmembrane segment at 282–302 (WLYLAAYCIAYFNSCLNAIIY) threads the bilayer. The Cytoplasmic segment spans residues 303–591 (GILNESFRRE…DSDCSDEMAV (289 aa)). The interval 378–427 (LPGDASAPHSDRASVRPKPQTRSTSVYRKPASIHHKSISGHPKSASVYPK) is disordered.

Belongs to the G-protein coupled receptor 1 family. In terms of assembly, homodimer, and heterodimer with MTNR1A and MTNR1B. Interacts with KAT5. Interacts with RTN4 isoform A/NOGO-A. Interacts with TGFBR1. In terms of tissue distribution, strongly expressed in the brain with highly restricted pattern of expression, confined to a subset of the ependymal cells of the third ventricle and a population of cells in the dorsomedial hypothalamic nucleus.

It is found in the cell membrane. The protein resides in the postsynaptic density. In terms of biological role, g protein-coupled receptor that plays a role in numerous physiological processes including regulation of energy metabolism, neurite outgrowth or cell migration. Promotes self-renewal and neuronal differentiation of neural progenitor cells through activation of the NOTCH and WNT/beta-catenin signaling pathways. Modulates the KAT5-dependent glucocorticoid receptor signaling by modulating KAT5 subcellular compartmentalisation. Also plays a role in the activation TGFBR1 in the absence of TGFBR2 by interfering with FKBP1A binding to TGFBR1, leading to induction of both canonical and non-canonical SMAD signaling pathways resulting in inhibition of proliferation or promotion of migration. The polypeptide is Melatonin-related receptor (Gpr50) (Mus musculus (Mouse)).